We begin with the raw amino-acid sequence, 320 residues long: Olfactory receptor 2T12 (320 aa).

Over 1 to 23 the chain is Extracellular; sequence MEMRNTTPDFILLGLFNHTRAHQ. N-linked (GlcNAc...) asparagine glycosylation occurs at asparagine 17. A helical transmembrane segment spans residues 24-47; sequence VLFMMLLATVLTSLFSNALMILLI. Topologically, residues 48-55 are cytoplasmic; sequence HWDHRLHR. A helical transmembrane segment spans residues 56 to 77; that stretch reads PMYFLLSQLSLMDMMLVSTTVP. Over 78–98 the chain is Extracellular; sequence KMAADYLTGNKAISRAGCGVQ. Cysteine 95 and cysteine 187 are joined by a disulfide. Residues 99–118 form a helical membrane-spanning segment; sequence IFFLPTLGGGECFLLAAMAY. The Cytoplasmic segment spans residues 119 to 137; sequence DRYAAVCHPLRYPTLMSWQ. A helical transmembrane segment spans residues 138–156; the sequence is LCLRMTMSSWLLGAADGLL. Topologically, residues 157-193 are extracellular; sequence QAVATLSFPYCGAHEIDHFFCEAPVLVRLACADTSVF. The helical transmembrane segment at 194 to 217 threads the bilayer; the sequence is ENAMYICCVLMLLVPFSLILSSYG. Residues 218 to 234 lie on the Cytoplasmic side of the membrane; that stretch reads LILAAVLLMRSTEARKK. Residues 235–257 traverse the membrane as a helical segment; it reads AFATCSSHVAVVGLFYGAGIFTY. The Extracellular portion of the chain corresponds to 258-270; that stretch reads MRPKSHRSTNHDK. Residues 271–290 traverse the membrane as a helical segment; sequence VVSAFYTMFTPLLNPLIYSV. The Cytoplasmic segment spans residues 291-320; that stretch reads RNSEVKEALKRWLGTCVNLKHQQNEAHRSR.

It belongs to the G-protein coupled receptor 1 family.

It localises to the cell membrane. In terms of biological role, odorant receptor. This Homo sapiens (Human) protein is Olfactory receptor 2T12 (OR2T12).